A 353-amino-acid polypeptide reads, in one-letter code: Guanine nucleotide-binding protein subunit alpha (353 aa).

Gly2 carries N-myristoyl glycine lipidation. The S-palmitoyl cysteine moiety is linked to residue Cys3. Residues 33 to 353 (NEIKMLLLGA…QLHLRECGLL (321 aa)) form the G-alpha domain. Residues 36-49 (KMLLLGAGESGKST) form a G1 motif region. Positions 44, 45, 46, 47, 48, 49, 150, 175, 181, 203, 269, 270, 272, and 325 each coordinate GTP. Residue Ser48 participates in Mg(2+) binding. Residues 173 to 181 (DILRSRVKT) form a G2 motif region. A Mg(2+)-binding site is contributed by Thr181. The tract at residues 196–205 (YKLFDVGGQR) is G3 motif. Residues 265–272 (ILFLNKID) form a G4 motif region. The segment at 323-328 (TCATDT) is G5 motif.

Belongs to the G-alpha family. G(q) subfamily. In terms of assembly, g proteins are composed of 3 units; alpha, beta and gamma. The alpha chain contains the guanine nucleotide binding site. Mg(2+) serves as cofactor.

Its function is as follows. Guanine nucleotide-binding proteins (G proteins) are involved as modulators or transducers in various transmembrane signaling systems. In Coprinellus congregatus (Inky cap fungus), this protein is Guanine nucleotide-binding protein subunit alpha (CGP1).